The chain runs to 357 residues: UDP-N-acetylglucosamine--N-acetylmuramyl-(pentapeptide) pyrophosphoryl-undecaprenol N-acetylglucosamine transferase (357 aa).

UDP-N-acetyl-alpha-D-glucosamine contacts are provided by residues 14 to 16 (TGG), Asn-128, Arg-169, Ser-193, Ile-248, and Gln-292.

This sequence belongs to the glycosyltransferase 28 family. MurG subfamily.

Its subcellular location is the cell inner membrane. It catalyses the reaction di-trans,octa-cis-undecaprenyl diphospho-N-acetyl-alpha-D-muramoyl-L-alanyl-D-glutamyl-meso-2,6-diaminopimeloyl-D-alanyl-D-alanine + UDP-N-acetyl-alpha-D-glucosamine = di-trans,octa-cis-undecaprenyl diphospho-[N-acetyl-alpha-D-glucosaminyl-(1-&gt;4)]-N-acetyl-alpha-D-muramoyl-L-alanyl-D-glutamyl-meso-2,6-diaminopimeloyl-D-alanyl-D-alanine + UDP + H(+). It functions in the pathway cell wall biogenesis; peptidoglycan biosynthesis. Cell wall formation. Catalyzes the transfer of a GlcNAc subunit on undecaprenyl-pyrophosphoryl-MurNAc-pentapeptide (lipid intermediate I) to form undecaprenyl-pyrophosphoryl-MurNAc-(pentapeptide)GlcNAc (lipid intermediate II). This is UDP-N-acetylglucosamine--N-acetylmuramyl-(pentapeptide) pyrophosphoryl-undecaprenol N-acetylglucosamine transferase from Bdellovibrio bacteriovorus (strain ATCC 15356 / DSM 50701 / NCIMB 9529 / HD100).